The following is a 458-amino-acid chain: Chromosomal replication initiator protein DnaA (458 aa).

A domain I, interacts with DnaA modulators region spans residues 1 to 93 (MKTELSEVWQ…NVIEDPAAEP (93 aa)). The tract at residues 94-119 (VDAPNVADLPAGTSAPAAEQNARLLG) is domain II. The segment at 120 to 336 (YINPKYTFET…GALTRVVAYA (217 aa)) is domain III, AAA+ region. Residues glycine 164, glycine 166, lysine 167, and threonine 168 each contribute to the ATP site. The segment at 337 to 458 (NMLKCPLTYD…EQLIARIRAE (122 aa)) is domain IV, binds dsDNA.

The protein belongs to the DnaA family. In terms of assembly, oligomerizes as a right-handed, spiral filament on DNA at oriC.

It localises to the cytoplasm. Its function is as follows. Plays an essential role in the initiation and regulation of chromosomal replication. ATP-DnaA binds to the origin of replication (oriC) to initiate formation of the DNA replication initiation complex once per cell cycle. Binds the DnaA box (a 9 base pair repeat at the origin) and separates the double-stranded (ds)DNA. Forms a right-handed helical filament on oriC DNA; dsDNA binds to the exterior of the filament while single-stranded (ss)DNA is stabiized in the filament's interior. The ATP-DnaA-oriC complex binds and stabilizes one strand of the AT-rich DNA unwinding element (DUE), permitting loading of DNA polymerase. After initiation quickly degrades to an ADP-DnaA complex that is not apt for DNA replication. Binds acidic phospholipids. In Symbiobacterium thermophilum (strain DSM 24528 / JCM 14929 / IAM 14863 / T), this protein is Chromosomal replication initiator protein DnaA.